A 514-amino-acid polypeptide reads, in one-letter code: Sugar transport protein 11 (514 aa).

Residues 1 to 19 (MAGGAFIDESGHGGDYEGR) are Cytoplasmic-facing. A helical membrane pass occupies residues 20-40 (VTAFVMITCIVAAMGGLLFGY). Residues 41-82 (DIGISGGVISMEDFLTKFFPDVLRQMQNKRGRETEYCKYDNE) lie on the Extracellular side of the membrane. A helical transmembrane segment spans residues 83–103 (LLTLFTSSLYLAALFASFLAS). At 104–112 (TITRLFGRK) the chain is on the cytoplasmic side. A helical membrane pass occupies residues 113-133 (VSMVIGSLAFLSGALLNGLAI). Residues 134–137 (NLEM) lie on the Extracellular side of the membrane. A helical transmembrane segment spans residues 138–158 (LIIGRLFLGVGVGFANQSVPL). Over 159–169 (YLSEMAPAKIR) the chain is Cytoplasmic. Residues 170-190 (GALNIGFQLAITIGILAANIV) form a helical membrane-spanning segment. The Extracellular segment spans residues 191-204 (NYVTPKLQNGIGWR). Residues 205-225 (LSLGLAGVPAVMMLVGCFFLP) traverse the membrane as a helical segment. Over 226–290 (DTPNSILERG…RYRPQLTFCT (65 aa)) the chain is Cytoplasmic. A helical membrane pass occupies residues 291–311 (FIPFFQQLTGINVIMFYAPVL). The Extracellular portion of the chain corresponds to 312-320 (FKTIGFGND). A helical transmembrane segment spans residues 321 to 341 (ASLISAVITGLVNVLSTIVSI). Residues 342–350 (YSVDKFGRR) are Cytoplasmic-facing. A helical transmembrane segment spans residues 351 to 371 (ALFLQGGFQMIVTQIAVGSMI). The Extracellular segment spans residues 372–389 (GWKFGFNGEGNLSGVDAD). Residues 390-410 (IILALICLYVAGFAWSWGPLG) form a helical membrane-spanning segment. Over 411–428 (WLVPSEICPLEIRSAGQS) the chain is Cytoplasmic. A helical transmembrane segment spans residues 429 to 449 (LNVSVNMFFTFFIGQFFLTML). Over 450–453 (CHMK) the chain is Extracellular. Residues 454 to 474 (FGLFYFFAGMVLIMTIFIYFL) traverse the membrane as a helical segment. Residues 475–514 (LPETKGVPIEEMGKVWKEHRYWGKYSNNDDGDDVDDDAYF) lie on the Cytoplasmic side of the membrane.

It belongs to the major facilitator superfamily. Sugar transporter (TC 2.A.1.1) family. In terms of tissue distribution, specifically expressed in germinating pollen and pollen tube (at protein level).

It localises to the cell membrane. Its activity is regulated as follows. Inhibited by uncouplers such as 2,4-dinitrophenol and carbonyl cyanide-m-chlorophenyl-hydrazone. Functionally, mediates an active uptake of hexoses, probably by sugar/hydrogen symport. Can transport glucose, galactose, mannose, xylose and 3-O-methylglucose, but not fructose and ribose. This chain is Sugar transport protein 11 (STP11), found in Arabidopsis thaliana (Mouse-ear cress).